The sequence spans 278 residues: Bifunctional protein FolD (278 aa).

NADP(+) is bound by residues 165 to 167 (GRS), Ser-190, and Thr-231.

Belongs to the tetrahydrofolate dehydrogenase/cyclohydrolase family. As to quaternary structure, homodimer.

The enzyme catalyses (6R)-5,10-methylene-5,6,7,8-tetrahydrofolate + NADP(+) = (6R)-5,10-methenyltetrahydrofolate + NADPH. The catalysed reaction is (6R)-5,10-methenyltetrahydrofolate + H2O = (6R)-10-formyltetrahydrofolate + H(+). It participates in one-carbon metabolism; tetrahydrofolate interconversion. Functionally, catalyzes the oxidation of 5,10-methylenetetrahydrofolate to 5,10-methenyltetrahydrofolate and then the hydrolysis of 5,10-methenyltetrahydrofolate to 10-formyltetrahydrofolate. This is Bifunctional protein FolD from Clostridium acetobutylicum (strain ATCC 824 / DSM 792 / JCM 1419 / IAM 19013 / LMG 5710 / NBRC 13948 / NRRL B-527 / VKM B-1787 / 2291 / W).